The sequence spans 459 residues: Argininosuccinate lyase (459 aa).

The protein belongs to the lyase 1 family. Argininosuccinate lyase subfamily.

The protein resides in the cytoplasm. It carries out the reaction 2-(N(omega)-L-arginino)succinate = fumarate + L-arginine. It functions in the pathway amino-acid biosynthesis; L-arginine biosynthesis; L-arginine from L-ornithine and carbamoyl phosphate: step 3/3. The sequence is that of Argininosuccinate lyase from Geobacillus sp. (strain WCH70).